Reading from the N-terminus, the 105-residue chain is MRGMGNMQGMMKQMQKMQKEMAKAQADLEAQEFTGTAGGGMVTVKATGKRVITDVVINEEVVDPEDIEMLQDLVLAATNDVLKQIEDTTSQTMGKFTQGLNIPGM.

Residues Met-1 to Lys-16 are compositionally biased toward low complexity. The segment at Met-1 to Lys-23 is disordered.

The protein belongs to the YbaB/EbfC family. In terms of assembly, homodimer.

It localises to the cytoplasm. Its subcellular location is the nucleoid. Functionally, binds to DNA and alters its conformation. May be involved in regulation of gene expression, nucleoid organization and DNA protection. The polypeptide is Nucleoid-associated protein Lm4b_02677 (Listeria monocytogenes serotype 4b (strain CLIP80459)).